The primary structure comprises 462 residues: Fumarate hydratase class II (462 aa).

Substrate is bound by residues 97 to 99 (SGT), 127 to 130 (HPND), 137 to 139 (SSN), and threonine 185. The active-site Proton donor/acceptor is the histidine 186. The active site involves serine 316. Residues serine 317 and 322–324 (KVN) each bind substrate.

Belongs to the class-II fumarase/aspartase family. Fumarase subfamily. In terms of assembly, homotetramer.

The protein localises to the cytoplasm. The enzyme catalyses (S)-malate = fumarate + H2O. Its pathway is carbohydrate metabolism; tricarboxylic acid cycle; (S)-malate from fumarate: step 1/1. In terms of biological role, involved in the TCA cycle. Catalyzes the stereospecific interconversion of fumarate to L-malate. This Bacillus subtilis (strain 168) protein is Fumarate hydratase class II.